Consider the following 217-residue polypeptide: Deoxyribose-phosphate aldolase (217 aa).

Residue aspartate 90 is the Proton donor/acceptor of the active site. Lysine 152 serves as the catalytic Schiff-base intermediate with acetaldehyde. The active-site Proton donor/acceptor is the lysine 181.

It belongs to the DeoC/FbaB aldolase family. DeoC type 1 subfamily.

Its subcellular location is the cytoplasm. The catalysed reaction is 2-deoxy-D-ribose 5-phosphate = D-glyceraldehyde 3-phosphate + acetaldehyde. It functions in the pathway carbohydrate degradation; 2-deoxy-D-ribose 1-phosphate degradation; D-glyceraldehyde 3-phosphate and acetaldehyde from 2-deoxy-alpha-D-ribose 1-phosphate: step 2/2. Its function is as follows. Catalyzes a reversible aldol reaction between acetaldehyde and D-glyceraldehyde 3-phosphate to generate 2-deoxy-D-ribose 5-phosphate. The protein is Deoxyribose-phosphate aldolase of Metamycoplasma hominis (Mycoplasma hominis).